A 75-amino-acid polypeptide reads, in one-letter code: Small ribosomal subunit protein bS18 (75 aa).

This sequence belongs to the bacterial ribosomal protein bS18 family. Part of the 30S ribosomal subunit. Forms a tight heterodimer with protein bS6.

Its function is as follows. Binds as a heterodimer with protein bS6 to the central domain of the 16S rRNA, where it helps stabilize the platform of the 30S subunit. This is Small ribosomal subunit protein bS18 from Paracoccus denitrificans (strain Pd 1222).